Consider the following 293-residue polypeptide: Bifunctional protein FolD (293 aa).

NADP(+)-binding positions include 165–167, Ser190, and Ile231; that span reads GRS.

Belongs to the tetrahydrofolate dehydrogenase/cyclohydrolase family. As to quaternary structure, homodimer.

It carries out the reaction (6R)-5,10-methylene-5,6,7,8-tetrahydrofolate + NADP(+) = (6R)-5,10-methenyltetrahydrofolate + NADPH. It catalyses the reaction (6R)-5,10-methenyltetrahydrofolate + H2O = (6R)-10-formyltetrahydrofolate + H(+). It functions in the pathway one-carbon metabolism; tetrahydrofolate interconversion. In terms of biological role, catalyzes the oxidation of 5,10-methylenetetrahydrofolate to 5,10-methenyltetrahydrofolate and then the hydrolysis of 5,10-methenyltetrahydrofolate to 10-formyltetrahydrofolate. This Synechococcus sp. (strain WH7803) protein is Bifunctional protein FolD.